Here is a 659-residue protein sequence, read N- to C-terminus: Cysteine-rich receptor-like protein kinase 5 (659 aa).

The first 24 residues, 1–24, serve as a signal peptide directing secretion; it reads MSAYTSLNFLFLLTFFIGSLRVSA. Residues 25–279 lie on the Extracellular side of the membrane; the sequence is QLQDPTYVGH…FPPGKGKNST (255 aa). Gnk2-homologous domains follow at residues 28 to 132 and 138 to 243; these read DPTY…DRNI and TTTT…VYPF. N-linked (GlcNAc...) asparagine glycosylation is found at Asn-175 and Asn-277. A helical transmembrane segment spans residues 280-300; that stretch reads VIIIAIVVPVAISVLICVAVF. Over 301–659 the chain is Cytoplasmic; the sequence is SFHASKRAKK…AASITILAPR (359 aa). Positions 340 to 619 constitute a Protein kinase domain; sequence FSMCNKLGQG…QMLTTSSIAL (280 aa). ATP is bound by residues 346-354 and Lys-368; that span reads LGQGGFGQV. Position 413 is a phosphotyrosine (Tyr-413). Asp-465 functions as the Proton acceptor in the catalytic mechanism. Thr-505 carries the post-translational modification Phosphothreonine. Tyr-513 bears the Phosphotyrosine mark.

Belongs to the protein kinase superfamily. Ser/Thr protein kinase family. CRK subfamily. In terms of assembly, interacts with CRKIP1 (KAPP), CRKIP2 and CRKIP3, three kinase-associated type 2C proteins.

The protein resides in the membrane. It catalyses the reaction L-seryl-[protein] + ATP = O-phospho-L-seryl-[protein] + ADP + H(+). It carries out the reaction L-threonyl-[protein] + ATP = O-phospho-L-threonyl-[protein] + ADP + H(+). In terms of biological role, involved in multiple distinct defense responses. May function as a disease resistance (R) protein. The chain is Cysteine-rich receptor-like protein kinase 5 (CRK5) from Arabidopsis thaliana (Mouse-ear cress).